The following is a 101-amino-acid chain: NADH-quinone oxidoreductase subunit K (101 aa).

Transmembrane regions (helical) follow at residues 2 to 22 (TLSA…YGAL), 28 to 48 (VIVL…FVAF), and 62 to 82 (FALF…AALI).

This sequence belongs to the complex I subunit 4L family. As to quaternary structure, NDH-1 is composed of 14 different subunits. Subunits NuoA, H, J, K, L, M, N constitute the membrane sector of the complex.

It is found in the cell membrane. It carries out the reaction a quinone + NADH + 5 H(+)(in) = a quinol + NAD(+) + 4 H(+)(out). Functionally, NDH-1 shuttles electrons from NADH, via FMN and iron-sulfur (Fe-S) centers, to quinones in the respiratory chain. The immediate electron acceptor for the enzyme in this species is believed to be a menaquinone. Couples the redox reaction to proton translocation (for every two electrons transferred, four hydrogen ions are translocated across the cytoplasmic membrane), and thus conserves the redox energy in a proton gradient. The sequence is that of NADH-quinone oxidoreductase subunit K from Geobacillus kaustophilus (strain HTA426).